A 218-amino-acid chain; its full sequence is Pyridoxine/pyridoxamine 5'-phosphate oxidase (218 aa).

Substrate-binding positions include arginine 14–tyrosine 17 and lysine 72. Residues arginine 67 to lysine 72, tyrosine 82 to threonine 83, arginine 88, lysine 89, and glutamine 111 contribute to the FMN site. Substrate contacts are provided by tyrosine 129, arginine 133, and serine 137. FMN contacts are provided by residues glutamine 146–serine 147 and tryptophan 191. Arginine 197 to histidine 199 provides a ligand contact to substrate. Arginine 201 is an FMN binding site.

The protein belongs to the pyridoxamine 5'-phosphate oxidase family. Homodimer. The cofactor is FMN.

It carries out the reaction pyridoxamine 5'-phosphate + O2 + H2O = pyridoxal 5'-phosphate + H2O2 + NH4(+). The catalysed reaction is pyridoxine 5'-phosphate + O2 = pyridoxal 5'-phosphate + H2O2. It functions in the pathway cofactor metabolism; pyridoxal 5'-phosphate salvage; pyridoxal 5'-phosphate from pyridoxamine 5'-phosphate: step 1/1. It participates in cofactor metabolism; pyridoxal 5'-phosphate salvage; pyridoxal 5'-phosphate from pyridoxine 5'-phosphate: step 1/1. Functionally, catalyzes the oxidation of either pyridoxine 5'-phosphate (PNP) or pyridoxamine 5'-phosphate (PMP) into pyridoxal 5'-phosphate (PLP). This chain is Pyridoxine/pyridoxamine 5'-phosphate oxidase, found in Citrobacter koseri (strain ATCC BAA-895 / CDC 4225-83 / SGSC4696).